A 296-amino-acid polypeptide reads, in one-letter code: Putative peptide transport system permease protein BRA1093/BS1330_II1085 (296 aa).

The next 6 helical transmembrane spans lie at 35–55 (IGLV…WITN), 97–117 (LWIG…IGIA), 131–151 (VMDA…SAAL), 205–225 (ILPN…AYAI), 229–249 (ATLS…GSIV), and 260–280 (WWIM…INLI). The ABC transmembrane type-1 domain maps to 97–281 (LWIGLTVAVL…ISALAINLIG (185 aa)).

The protein belongs to the binding-protein-dependent transport system permease family. The complex is composed of two ATP-binding proteins (BRA1094), two transmembrane proteins (BRA1092 and BRA1093) and a solute-binding protein (BRA1090).

Its subcellular location is the cell inner membrane. Its function is as follows. Probably part of an ABC transporter complex that could be involved in peptide import. Probably responsible for the translocation of the substrate across the membrane. The sequence is that of Putative peptide transport system permease protein BRA1093/BS1330_II1085 from Brucella suis biovar 1 (strain 1330).